A 155-amino-acid chain; its full sequence is Riboflavin kinase (155 aa).

Gly15, Lys21, Thr27, and Asn29 together coordinate ATP. Mg(2+) contacts are provided by Thr27 and Asn29. Glu79 functions as the Nucleophile in the catalytic mechanism. The ATP site is built by Ile82, His84, and Tyr91. Positions 104, 107, and 109 each coordinate FMN.

Monomer. Directly interacts with TNFRSF1A death domain; this interaction may be supported by TRADD. In the absence of TNFRSF1A, interacts with TRADD. Independently of TNFRSF1A, interacts with the NADPH oxidase subunit CYBA. The cofactor is Zn(2+). Mg(2+) is required as a cofactor.

It localises to the cytoplasm. It catalyses the reaction riboflavin + ATP = FMN + ADP + H(+). It participates in cofactor biosynthesis; FMN biosynthesis; FMN from riboflavin (ATP route): step 1/1. Functionally, catalyzes the phosphorylation of riboflavin (vitamin B2) to form flavin-mononucleotide (FMN), hence rate-limiting enzyme in the synthesis of FAD. Essential for TNF-induced reactive oxygen species (ROS) production. Through its interaction with both TNFRSF1A and CYBA, physically and functionally couples TNFRSF1A to NADPH oxidase. TNF-activation of RFK may enhance the incorporation of FAD in NADPH oxidase, a critical step for the assembly and activation of NADPH oxidase. The protein is Riboflavin kinase (Rfk) of Mus musculus (Mouse).